Consider the following 194-residue polypeptide: Ras-like protein rasS (194 aa).

GTP is bound at residue 10–17 (GPGGVGKS). The short motif at 32-40 (YDPTLEDSY) is the Effector region element. Residues 57-61 (DTAGQ) and 116-119 (NKCD) each bind GTP. Residues 168–194 (RQSNQHSNSQEQNTDQPIKKKKSCNLL) form a disordered region. The segment covering 169 to 180 (QSNQHSNSQEQN) has biased composition (low complexity). Cysteine methyl ester is present on cysteine 191. Residue cysteine 191 is the site of S-geranylgeranyl cysteine attachment. Positions 192–194 (NLL) are cleaved as a propeptide — removed in mature form.

It belongs to the small GTPase superfamily. Ras family.

Its subcellular location is the cell membrane. The catalysed reaction is GTP + H2O = GDP + phosphate + H(+). In terms of biological role, ras proteins bind GDP/GTP and possess intrinsic GTPase activity. This is Ras-like protein rasS (rasS) from Dictyostelium discoideum (Social amoeba).